Consider the following 590-residue polypeptide: Potassium-transporting ATPase potassium-binding subunit (590 aa).

10 helical membrane-spanning segments follow: residues 11-31, 64-84, 136-156, 178-198, 273-293, 301-321, 403-423, 442-462, 511-531, and 552-572; these read IFIAAVLLGAKPLGVYMAAVF, TAYCASMLIFSAATMLLTYLI, GLATHNFWSAAVGIALAIAFI, ILWVLLPICVVFALVLTSQGV, MLEMISIFLIPAGLTVTLGQM, WAVLGAMLILWFAGVATCYWA, AGLYGMLVFVIVAVFIAGLMV, AMLYLLIFPLIILGFSAVAVL, LGFAMFIGRFLMIVPMLALAG, and LFTVLLTSVIIVVGALTFLPA.

This sequence belongs to the KdpA family. In terms of assembly, the system is composed of three essential subunits: KdpA, KdpB and KdpC.

Its subcellular location is the cell inner membrane. Functionally, part of the high-affinity ATP-driven potassium transport (or Kdp) system, which catalyzes the hydrolysis of ATP coupled with the electrogenic transport of potassium into the cytoplasm. This subunit binds the periplasmic potassium ions and delivers the ions to the membrane domain of KdpB through an intramembrane tunnel. The protein is Potassium-transporting ATPase potassium-binding subunit of Acidobacterium capsulatum (strain ATCC 51196 / DSM 11244 / BCRC 80197 / JCM 7670 / NBRC 15755 / NCIMB 13165 / 161).